The primary structure comprises 402 residues: tRNA(Met) cytidine acetate ligase (402 aa).

Residues Ile-7–His-20, Gly-102, Asn-171, and Arg-196 contribute to the ATP site.

Belongs to the TmcAL family.

The protein resides in the cytoplasm. The catalysed reaction is cytidine(34) in elongator tRNA(Met) + acetate + ATP = N(4)-acetylcytidine(34) in elongator tRNA(Met) + AMP + diphosphate. Its function is as follows. Catalyzes the formation of N(4)-acetylcytidine (ac(4)C) at the wobble position of elongator tRNA(Met), using acetate and ATP as substrates. First activates an acetate ion to form acetyladenylate (Ac-AMP) and then transfers the acetyl group to tRNA to form ac(4)C34. The chain is tRNA(Met) cytidine acetate ligase from Clostridium acetobutylicum (strain ATCC 824 / DSM 792 / JCM 1419 / IAM 19013 / LMG 5710 / NBRC 13948 / NRRL B-527 / VKM B-1787 / 2291 / W).